The sequence spans 294 residues: Glucosamine kinase GspK (294 aa).

Threonine 12 lines the ATP pocket. Aspartate 101 is a binding site for substrate. Residue threonine 122 coordinates ATP. Residues 139-141 and aspartate 146 contribute to the substrate site; that span reads GRE. Glycine 202 contacts ATP.

The protein belongs to the eukaryotic-type N-acetylglucosamine kinase family.

Its subcellular location is the cytoplasm. It carries out the reaction D-glucosamine + ATP = D-glucosamine 6-phosphate + ADP + H(+). ATP-dependent kinase, which is specific for glucosamine. Does not show kinase activity with any other sugar. This is Glucosamine kinase GspK (gspK) from Vibrio cholerae serotype O1 (strain ATCC 39315 / El Tor Inaba N16961).